The sequence spans 634 residues: Probable potassium transport system protein Kup 2 (634 aa).

The next 12 membrane-spanning stretches (helical) occupy residues L15–F35, V55–L75, W101–I121, G142–F162, L173–I193, A208–L228, W252–L272, L303–Y323, I351–F371, Y381–W401, P408–A428, and E435–L455.

This sequence belongs to the HAK/KUP transporter (TC 2.A.72) family.

Its subcellular location is the cell inner membrane. It catalyses the reaction K(+)(in) + H(+)(in) = K(+)(out) + H(+)(out). Transport of potassium into the cell. Likely operates as a K(+):H(+) symporter. This Novosphingobium aromaticivorans (strain ATCC 700278 / DSM 12444 / CCUG 56034 / CIP 105152 / NBRC 16084 / F199) protein is Probable potassium transport system protein Kup 2.